Here is a 315-residue protein sequence, read N- to C-terminus: beta-hydroxyaspartate dehydratase (315 aa).

Lys-53 bears the N6-(pyridoxal phosphate)lysine mark. Pyridoxal 5'-phosphate contacts are provided by residues Asn-80, 179 to 183, and Thr-303; that span reads GGGGM.

Requires pyridoxal 5'-phosphate as cofactor.

The catalysed reaction is (3S)-3-hydroxy-D-aspartate = iminosuccinate + H2O. In terms of biological role, catalyzes the dehydration of (2R,3S)-beta-hydroxyaspartate ((3S)-3-hydroxy-D-aspartate) into iminosuccinate. Is essential for the growth of P.denitrificans in the presence of glycolate and glyoxylate since it functions in glyoxylate assimilation via the beta-hydroxyaspartate cycle (BHAC). This is beta-hydroxyaspartate dehydratase from Paracoccus denitrificans (strain Pd 1222).